The following is a 954-amino-acid chain: MAKVRVHELAKELGITSKDAVTKLQELGEFVRSASSTIEAPVVRKLRNAFPDAANKAAAPAAPKAPAPAAESRPAAPAPGPAAPKAPAPKVEAPAPAAPAASAPAAPQASSAAPAAPSTGAKPGARPGPKAETPAPAPRQGGSSQGSSAPRPGGPRPGNNPFATSQGMPRGRGGDGDRAPRPGNNPFATSQGMPRPGRSDGERPGGPRPAAGAGGPRPGGPRPAPGAGGPRPAAGAGGPRPGAPRPGGPRPTPGMMPNRTERPAPAGAGRPGGGGRGPGRPGAPGTGGPGGGGGAPAGGGFGKGGRGRGGTQGAFGKGGAGRGKQRKSKRAKRQELEQMSAPSLGGVSVPRGDGNTVIRLRRGSSITDFADKIEANPAALVTVLFHLGEMATATQSLDEDTFALLGEELGYKLQVVSPEDEERELLSTFDIDVEAELEAEGDEELEPRAPVVTVMGHVDHGKTRLLDAIRNSDVVAGEHGGITQHIGAYQISHEHEGVERDITFIDTPGHEAFTAMRARGAKVTDIAILVVAADDGVMPQTVEALNHAQAANVPIVVAVNKIDKEGANPDKVKGQLTEYGLVPEEYGGDTMFVEVSARQNLNINELIDAVLLTADAALDLRANPDKAARGIAIEANLDKGRGAVATVLVQSGTLAVGDTIVAGTAHGRVRAMFDEDGQALDVALPSRPVQVLGLSNVPRAGDTFLVTSDERTARQIAEKREAADRNAQLAKRRKRISLEDFDQAVADGKIDTLNLILKGDVSGAVEALEDALLKIDVGEGVQLRVIHRGVGAITQNDVNLATVDSAVIIGFNVKPAERVADLADREGVDMRFYSVIYAAIDDIEAALKGMLKPEYEEFQLGTAEVREVFRSSKFGNIAGSIVRSGIIRRNTKARISRDGKIIGDNLTIETLKRFKDDATEVRTDFECGIGLGSYNDITEGDIIETFEMREKPRV.

The segment covering 56 to 75 has biased composition (low complexity); sequence KAAAPAAPKAPAPAAESRPA. Residues 56–355 are disordered; sequence KAAAPAAPKA…GVSVPRGDGN (300 aa). The segment covering 76-87 has biased composition (pro residues); that stretch reads APAPGPAAPKAP. 2 stretches are compositionally biased toward low complexity: residues 88-125 and 138-151; these read APKV…KPGA and PRQG…SAPR. Residues 241-254 show a composition bias toward pro residues; it reads PGAPRPGGPRPTPG. A compositionally biased stretch (gly residues) spans 269–322; it reads GRPGGGGRGPGRPGAPGTGGPGGGGGAPAGGGFGKGGRGRGGTQGAFGKGGAGR. Residues 323–332 show a composition bias toward basic residues; that stretch reads GKQRKSKRAK. One can recognise a tr-type G domain in the interval 447–618; that stretch reads PRAPVVTVMG…AVLLTADAAL (172 aa). Residues 456–463 are G1; it reads GHVDHGKT. GTP is bound at residue 456–463; the sequence is GHVDHGKT. Residues 481–485 form a G2 region; sequence GITQH. The interval 506–509 is G3; the sequence is DTPG. Residues 506–510 and 560–563 each bind GTP; these read DTPGH and NKID. The G4 stretch occupies residues 560–563; sequence NKID. Residues 596 to 598 form a G5 region; the sequence is SAR.

Belongs to the TRAFAC class translation factor GTPase superfamily. Classic translation factor GTPase family. IF-2 subfamily.

It localises to the cytoplasm. One of the essential components for the initiation of protein synthesis. Protects formylmethionyl-tRNA from spontaneous hydrolysis and promotes its binding to the 30S ribosomal subunits. Also involved in the hydrolysis of GTP during the formation of the 70S ribosomal complex. The protein is Translation initiation factor IF-2 of Pseudarthrobacter chlorophenolicus (strain ATCC 700700 / DSM 12829 / CIP 107037 / JCM 12360 / KCTC 9906 / NCIMB 13794 / A6) (Arthrobacter chlorophenolicus).